A 314-amino-acid polypeptide reads, in one-letter code: tRNA pseudouridine synthase B (314 aa).

Asp-41 acts as the Nucleophile in catalysis.

The protein belongs to the pseudouridine synthase TruB family. Type 1 subfamily.

It carries out the reaction uridine(55) in tRNA = pseudouridine(55) in tRNA. In terms of biological role, responsible for synthesis of pseudouridine from uracil-55 in the psi GC loop of transfer RNAs. The chain is tRNA pseudouridine synthase B from Prochlorococcus marinus (strain NATL2A).